The following is a 321-amino-acid chain: MTILLNSSLQRATFFLTGFQGLEGLHGWISIPFCFIYLTVILGNLTILHVICTDATLHGPMYYFLGMLAVTDLGLCLSTLPTVLGIFWFDTREIGIPACFTQLFFIHTLSSMESSVLLSMSIDRYVAVCNPLHDSTVLTPACIVKMGLSSVLRSALLILPLPFLLKRFQYCHSHVLAHAYCLHLEIMKLACSSIIVNHIYGLFVVACTVGVDSLLIFLSYALILRTVLSIASHQERLRALNTCVSHICAVLLFYIPMIGLSLVHRFGEHLPRVVHLFMSYVYLLVPPLMNPIIYSIKTKQIRQRIIKKFQFIKSLRCFWKD.

Topologically, residues 1 to 27 (MTILLNSSLQRATFFLTGFQGLEGLHG) are extracellular. Residue asparagine 6 is glycosylated (N-linked (GlcNAc...) asparagine). A helical membrane pass occupies residues 28–48 (WISIPFCFIYLTVILGNLTIL). At 49 to 56 (HVICTDAT) the chain is on the cytoplasmic side. The chain crosses the membrane as a helical span at residues 57–77 (LHGPMYYFLGMLAVTDLGLCL). The Extracellular segment spans residues 78-101 (STLPTVLGIFWFDTREIGIPACFT). Cysteine 99 and cysteine 191 are joined by a disulfide. Residues 102–122 (QLFFIHTLSSMESSVLLSMSI) form a helical membrane-spanning segment. Residues 123 to 141 (DRYVAVCNPLHDSTVLTPA) are Cytoplasmic-facing. The chain crosses the membrane as a helical span at residues 142–162 (CIVKMGLSSVLRSALLILPLP). The Extracellular segment spans residues 163-198 (FLLKRFQYCHSHVLAHAYCLHLEIMKLACSSIIVNH). The helical transmembrane segment at 199-219 (IYGLFVVACTVGVDSLLIFLS) threads the bilayer. The Cytoplasmic portion of the chain corresponds to 220 to 239 (YALILRTVLSIASHQERLRA). A helical transmembrane segment spans residues 240-260 (LNTCVSHICAVLLFYIPMIGL). At 261–275 (SLVHRFGEHLPRVVH) the chain is on the extracellular side. Residues 276–296 (LFMSYVYLLVPPLMNPIIYSI) form a helical membrane-spanning segment. Topologically, residues 297 to 321 (KTKQIRQRIIKKFQFIKSLRCFWKD) are cytoplasmic.

The protein belongs to the G-protein coupled receptor 1 family.

It is found in the cell membrane. In terms of biological role, odorant receptor. The polypeptide is Olfactory receptor 51G1 (OR51G1) (Homo sapiens (Human)).